A 759-amino-acid polypeptide reads, in one-letter code: Phosphoribosylformylglycinamidine synthase subunit PurL (759 aa).

The active site involves H34. Y37 is a binding site for ATP. E95 provides a ligand contact to Mg(2+). Residues 96–99 and R118 each bind substrate; that span reads SHNH. H97 serves as the catalytic Proton acceptor. D119 contacts Mg(2+). Q243 contacts substrate. D271 contributes to the Mg(2+) binding site. 315–317 contributes to the substrate binding site; the sequence is ESQ. The interval 388 to 422 is disordered; it reads DGAPMNDLASESPTQPDRDLPDPEPSLDEAVESVV. ATP-binding residues include D520 and G557. A Mg(2+)-binding site is contributed by N558. S560 is a binding site for substrate.

It belongs to the FGAMS family. Monomer. Part of the FGAM synthase complex composed of 1 PurL, 1 PurQ and 2 PurS subunits.

The protein localises to the cytoplasm. The catalysed reaction is N(2)-formyl-N(1)-(5-phospho-beta-D-ribosyl)glycinamide + L-glutamine + ATP + H2O = 2-formamido-N(1)-(5-O-phospho-beta-D-ribosyl)acetamidine + L-glutamate + ADP + phosphate + H(+). It functions in the pathway purine metabolism; IMP biosynthesis via de novo pathway; 5-amino-1-(5-phospho-D-ribosyl)imidazole from N(2)-formyl-N(1)-(5-phospho-D-ribosyl)glycinamide: step 1/2. Part of the phosphoribosylformylglycinamidine synthase complex involved in the purines biosynthetic pathway. Catalyzes the ATP-dependent conversion of formylglycinamide ribonucleotide (FGAR) and glutamine to yield formylglycinamidine ribonucleotide (FGAM) and glutamate. The FGAM synthase complex is composed of three subunits. PurQ produces an ammonia molecule by converting glutamine to glutamate. PurL transfers the ammonia molecule to FGAR to form FGAM in an ATP-dependent manner. PurS interacts with PurQ and PurL and is thought to assist in the transfer of the ammonia molecule from PurQ to PurL. This Halorubrum lacusprofundi (strain ATCC 49239 / DSM 5036 / JCM 8891 / ACAM 34) protein is Phosphoribosylformylglycinamidine synthase subunit PurL.